A 229-amino-acid chain; its full sequence is Uracil-DNA glycosylase (229 aa).

Asp65 acts as the Proton acceptor in catalysis.

It belongs to the uracil-DNA glycosylase (UDG) superfamily. UNG family.

The protein resides in the cytoplasm. It catalyses the reaction Hydrolyzes single-stranded DNA or mismatched double-stranded DNA and polynucleotides, releasing free uracil.. In terms of biological role, excises uracil residues from the DNA which can arise as a result of misincorporation of dUMP residues by DNA polymerase or due to deamination of cytosine. This chain is Uracil-DNA glycosylase, found in Limosilactobacillus reuteri (strain DSM 20016) (Lactobacillus reuteri).